The following is a 535-amino-acid chain: NEDD8-activating enzyme E1 regulatory subunit (535 aa).

Residues 332–345 (DMIADSSKFIKLQN) form an interaction with UBA3 region.

The protein belongs to the ubiquitin-activating E1 family. ULA1 subfamily. In terms of assembly, heterodimer of UBA3 and NAE1. The complex binds NEDD8 and UBE2M.

It participates in protein modification; protein neddylation. In terms of biological role, regulatory subunit of the dimeric UBA3-NAE1 E1 enzyme. E1 activates NEDD8 by first adenylating its C-terminal glycine residue with ATP, thereafter linking this residue to the side chain of the catalytic cysteine, yielding a NEDD8-UBA3 thioester and free AMP. E1 finally transfers NEDD8 to the catalytic cysteine of UBE2M. The covalent attachment of NEDD8 to target proteins is known as 'neddylation' and the process is involved in the regulation of cell growth, viability and development. This Gallus gallus (Chicken) protein is NEDD8-activating enzyme E1 regulatory subunit (NAE1).